Reading from the N-terminus, the 204-residue chain is Transcriptional regulator GfcR 1 (204 aa).

The protein belongs to the purine/pyrimidine phosphoribosyltransferase family. GfcR subfamily.

The protein is Transcriptional regulator GfcR 1 of Methanosarcina barkeri (strain Fusaro / DSM 804).